The primary structure comprises 430 residues: Tol-Pal system protein TolB (430 aa).

The N-terminal stretch at 1–21 is a signal peptide; that stretch reads MKQAFRVALGFLVLWASVLHA.

This sequence belongs to the TolB family. The Tol-Pal system is composed of five core proteins: the inner membrane proteins TolA, TolQ and TolR, the periplasmic protein TolB and the outer membrane protein Pal. They form a network linking the inner and outer membranes and the peptidoglycan layer.

Its subcellular location is the periplasm. Functionally, part of the Tol-Pal system, which plays a role in outer membrane invagination during cell division and is important for maintaining outer membrane integrity. TolB occupies a key intermediary position in the Tol-Pal system because it communicates directly with both membrane-embedded components, Pal in the outer membrane and TolA in the inner membrane. This is Tol-Pal system protein TolB from Yersinia enterocolitica serotype O:8 / biotype 1B (strain NCTC 13174 / 8081).